The following is a 132-amino-acid chain: Small ribosomal subunit protein uS8 (132 aa).

It belongs to the universal ribosomal protein uS8 family. In terms of assembly, part of the 30S ribosomal subunit. Contacts proteins S5 and S12.

Its function is as follows. One of the primary rRNA binding proteins, it binds directly to 16S rRNA central domain where it helps coordinate assembly of the platform of the 30S subunit. This chain is Small ribosomal subunit protein uS8, found in Rhizobium rhizogenes (strain K84 / ATCC BAA-868) (Agrobacterium radiobacter).